The chain runs to 157 residues: Ribosome maturation factor RimP (157 aa).

It belongs to the RimP family.

It localises to the cytoplasm. Its function is as follows. Required for maturation of 30S ribosomal subunits. The sequence is that of Ribosome maturation factor RimP from Synechococcus sp. (strain JA-3-3Ab) (Cyanobacteria bacterium Yellowstone A-Prime).